The sequence spans 163 residues: 18 kDa protein (163 aa).

This Mus musculus (Mouse) protein is 18 kDa protein.